Consider the following 125-residue polypeptide: Succinate dehydrogenase cytochrome b560 subunit (125 aa).

Helical transmembrane passes span 29–49 (ISGV…KLAT), 68–88 (ILPW…INGI), and 104–124 (IIKD…FKFI). Residue His83 participates in heme binding.

It belongs to the cytochrome b560 family. In terms of assembly, forms part of complex II containing four subunits: a 70 kDa flavoprotein (FP), a 27 kDa iron-sulfur protein (IP), a cytochrome B and a membrane-anchoring protein. It depends on heme as a cofactor.

The protein resides in the mitochondrion inner membrane. Its pathway is carbohydrate metabolism; tricarboxylic acid cycle. In terms of biological role, membrane-anchoring subunit of succinate dehydrogenase (SDH) that is involved in complex II of the mitochondrial electron transport chain and is responsible for transferring electrons from succinate to ubiquinone (coenzyme Q). This Porphyra purpurea (Red seaweed) protein is Succinate dehydrogenase cytochrome b560 subunit (SDH3).